A 504-amino-acid polypeptide reads, in one-letter code: 26S proteasome non-ATPase regulatory subunit 3 (504 aa).

Positions 254 to 434 (ARYFYYQGRI…GYLQSRENID (181 aa)) constitute a PCI domain. Residues 485-504 (KEEMERQAEESSDNEGDSDF) are disordered. Over residues 494 to 504 (ESSDNEGDSDF) the composition is skewed to acidic residues.

The protein belongs to the proteasome subunit S3 family. As to quaternary structure, the 26S proteasome is composed of a core protease, known as the 20S proteasome, capped at one or both ends by the 19S regulatory complex (RC). The RC is composed of at least 18 different subunits in two subcomplexes, the base and the lid, which form the portions proximal and distal to the 20S proteolytic core, respectively.

Functionally, acts as a regulatory subunit of the 26 proteasome which is involved in the ATP-dependent degradation of ubiquitinated proteins. This Dictyostelium discoideum (Social amoeba) protein is 26S proteasome non-ATPase regulatory subunit 3 (psmD3).